The primary structure comprises 98 residues: NADH-ubiquinone oxidoreductase chain 4L (98 aa).

3 helical membrane passes run 1-21, 29-49, and 61-81; these read MSLVYMNIMTAFAVSLTGLLM, SLLCLEGMMLSLFIMATLMIL, and IILLVFAACEAALGLSLLVMV.

The protein belongs to the complex I subunit 4L family. Core subunit of respiratory chain NADH dehydrogenase (Complex I) which is composed of 45 different subunits.

The protein localises to the mitochondrion inner membrane. It carries out the reaction a ubiquinone + NADH + 5 H(+)(in) = a ubiquinol + NAD(+) + 4 H(+)(out). In terms of biological role, core subunit of the mitochondrial membrane respiratory chain NADH dehydrogenase (Complex I) which catalyzes electron transfer from NADH through the respiratory chain, using ubiquinone as an electron acceptor. Part of the enzyme membrane arm which is embedded in the lipid bilayer and involved in proton translocation. This chain is NADH-ubiquinone oxidoreductase chain 4L (MT-ND4L), found in Capra hircus (Goat).